The chain runs to 64 residues: Potassium channel toxin kappa-KTx 3.1 (64 aa).

The signal sequence occupies residues 1–26; the sequence is MKSTLMTASVLILVLLSIVDYASVYA. The propeptide occupies 27 to 36; sequence EFIDSEISLE. 2 disulfide bridges follow: cysteine 43–cysteine 61 and cysteine 47–cysteine 57.

Belongs to the short scorpion toxin superfamily. Potassium channel inhibitor kappa-KTx family. Kappa-KTx 3 subfamily. Expressed by the venom gland.

It localises to the secreted. Potassium channel inhibitor (Kv). The polypeptide is Potassium channel toxin kappa-KTx 3.1 (Heterometrus petersii (Asian forest scorpion)).